The chain runs to 292 residues: MASLKDVQNQIVSIKKTKQITKAMNMVASAKLRGAQDRIERFRPYADKFYEMLGDLAAGADSSVHPLLEVHEEIKTVGIVLTTSDRGLCGSFNANMINAALKKAAEKKAEGKAVKFYCVGKKGAAAIKKTEYEIVEAYNDDMTHFDFNLAASIGNKVIDAYLAEELDEVFLVFGEFVNVASQPPNTLQILPMSSDAAGEEGESGANSEYIYEPSVEGLLAELLPRFVKVQVYRGLLDTSCSEHAARMAAMDNASRACDDMTETLTLLYNKTRQAAITADLMDIVGGAEALKG.

This sequence belongs to the ATPase gamma chain family. In terms of assembly, F-type ATPases have 2 components, CF(1) - the catalytic core - and CF(0) - the membrane proton channel. CF(1) has five subunits: alpha(3), beta(3), gamma(1), delta(1), epsilon(1). CF(0) has three main subunits: a, b and c.

It is found in the cell inner membrane. In terms of biological role, produces ATP from ADP in the presence of a proton gradient across the membrane. The gamma chain is believed to be important in regulating ATPase activity and the flow of protons through the CF(0) complex. This is ATP synthase gamma chain from Maridesulfovibrio salexigens (strain ATCC 14822 / DSM 2638 / NCIMB 8403 / VKM B-1763) (Desulfovibrio salexigens).